We begin with the raw amino-acid sequence, 294 residues long: HTH-type transcriptional regulator DgdR (294 aa).

The HTH lysR-type domain occupies 14 to 70 (LEIDLLRSFVVIAEVRALSRAAARVGRTQSALSQQMKRLEDIVDQPLFQRTGRGVVL). A DNA-binding region (H-T-H motif) is located at residues 31-50 (LSRAAARVGRTQSALSQQMK).

This sequence belongs to the LysR transcriptional regulatory family.

The sequence is that of HTH-type transcriptional regulator DgdR (dgdR) from Burkholderia cepacia (Pseudomonas cepacia).